A 395-amino-acid chain; its full sequence is Chaperone protein DnaJ 2 (395 aa).

Positions 10-75 (NYYADLGVSS…KKRKEYDELK (66 aa)) constitute a J domain. The segment at 165–242 (GTTIPVELTG…CHGRGTVRKS (78 aa)) adopts a CR-type zinc-finger fold. Residues C178, C181, C194, C197, C216, C219, C230, and C233 each contribute to the Zn(2+) site. 4 CXXCXGXG motif repeats span residues 178 to 185 (CNTCHGSG), 194 to 201 (CGTCDGTG), 216 to 223 (CATCGGTG), and 230 to 237 (CDNCHGRG).

Belongs to the DnaJ family. In terms of assembly, homodimer. Requires Zn(2+) as cofactor.

It is found in the cytoplasm. Functionally, participates actively in the response to hyperosmotic and heat shock by preventing the aggregation of stress-denatured proteins and by disaggregating proteins, also in an autonomous, DnaK-independent fashion. Unfolded proteins bind initially to DnaJ; upon interaction with the DnaJ-bound protein, DnaK hydrolyzes its bound ATP, resulting in the formation of a stable complex. GrpE releases ADP from DnaK; ATP binding to DnaK triggers the release of the substrate protein, thus completing the reaction cycle. Several rounds of ATP-dependent interactions between DnaJ, DnaK and GrpE are required for fully efficient folding. Also involved, together with DnaK and GrpE, in the DNA replication of plasmids through activation of initiation proteins. The chain is Chaperone protein DnaJ 2 from Corynebacterium glutamicum (strain ATCC 13032 / DSM 20300 / JCM 1318 / BCRC 11384 / CCUG 27702 / LMG 3730 / NBRC 12168 / NCIMB 10025 / NRRL B-2784 / 534).